The sequence spans 363 residues: MGSAESKAQVTPSRPLRNHLLSRVNDPRSPTSGIPRTPIEVGESPRNTPQTVKEEEEEIPDSPEIFDPRSPTNGITRTPLRPPIHAVLNNLAKQLSEVFVAEDSSTEGGPLGFTGPEATNLERQVVESQTAPPAGEHVNDHEVEPSVEKAETQIDLEVCPGVEKVKSPIAEMLETLNDQEESPIAETLETMNDQEESPIAETMNDQEESPIAETLENLNDQAESPIAETLENLNDQAESPIAEMLDTLNDQEPVAVAQSVVSTESTQATGQQQKTRGKSPRSSGVKNVRQRPRKALLSSSSGRSPLRILQEDNSPNTNTQHRQAKKLSFQSEPALPHRALKISHPNWESSLNKENAEYGHSNS.

Positions 1–12 (MGSAESKAQVTP) are enriched in polar residues. 4 disordered regions span residues 1-81 (MGSA…TPLR), 126-152 (VESQTAPPAGEHVNDHEVEPSVEKAET), 191-210 (MNDQEESPIAETMNDQEESP), and 231-363 (ENLN…HSNS). The tract at residues 93 to 152 (KQLSEVFVAEDSSTEGGPLGFTGPEATNLERQVVESQTAPPAGEHVNDHEVEPSVEKAET) is F-box-like. Residues 137–152 (HVNDHEVEPSVEKAET) show a composition bias toward basic and acidic residues. A compositionally biased stretch (acidic residues) spans 192-210 (NDQEESPIAETMNDQEESP). Residues 259-285 (SVVSTESTQATGQQQKTRGKSPRSSGV) show a composition bias toward polar residues. The segment covering 296 to 308 (LLSSSSGRSPLRI) has biased composition (low complexity). A compositionally biased stretch (polar residues) spans 311-321 (EDNSPNTNTQH). Positions 353 to 355 (KEN) match the KEN box motif.

In terms of assembly, interacts with wee1, when wee1 is phosphorylated at 'Ser-38'. Post-translationally, phosphorylated. In terms of processing, ubiquitinated and degraded by the APC/C-Cdh1 complex during G1 phase.

Its subcellular location is the cytoplasm. The protein resides in the cytosol. Its pathway is protein modification; protein ubiquitination. Its function is as follows. F-box-like protein which is required for entry into mitosis. Acts by participating in E3 ligase complexes that mediate the ubiquitination and degradation of WEE1 kinase at G2/M phase. This Xenopus laevis (African clawed frog) protein is Cell division cycle-associated protein 3 (cdca3).